The primary structure comprises 218 residues: Outer-membrane lipoprotein LolB (218 aa).

A signal peptide spans 1-20 (MSQVIRTLALTGLALAGLSG). The N-palmitoyl cysteine moiety is linked to residue C21. The S-diacylglycerol cysteine moiety is linked to residue C21.

This sequence belongs to the LolB family. Monomer.

It is found in the cell outer membrane. Functionally, plays a critical role in the incorporation of lipoproteins in the outer membrane after they are released by the LolA protein. The protein is Outer-membrane lipoprotein LolB of Xanthomonas campestris pv. campestris (strain B100).